Reading from the N-terminus, the 332-residue chain is 2,3-diketo-L-gulonate reductase (332 aa).

Residue H44 is the Proton donor of the active site. Residues 168 to 174, 224 to 225, and 304 to 306 each bind NAD(+); these read ITMVDMS, WK, and GHE.

Belongs to the LDH2/MDH2 oxidoreductase family. DlgD subfamily. In terms of assembly, homodimer.

The protein resides in the cytoplasm. The enzyme catalyses 3-dehydro-L-gulonate + NAD(+) = 2,3-dioxo-L-gulonate + NADH + H(+). It catalyses the reaction 3-dehydro-L-gulonate + NADP(+) = 2,3-dioxo-L-gulonate + NADPH + H(+). Catalyzes the reduction of 2,3-diketo-L-gulonate in the presence of NADH, to form 3-keto-L-gulonate. In Salmonella typhi, this protein is 2,3-diketo-L-gulonate reductase.